The sequence spans 547 residues: Chaperonin GroEL (547 aa).

Residues 30–33 (TLGP), Lys51, 87–91 (DGTTT), Gly415, 479–481 (DAA), and Asp495 each bind ATP.

The protein belongs to the chaperonin (HSP60) family. Forms a cylinder of 14 subunits composed of two heptameric rings stacked back-to-back. Interacts with the co-chaperonin GroES.

It is found in the cytoplasm. It catalyses the reaction ATP + H2O + a folded polypeptide = ADP + phosphate + an unfolded polypeptide.. Functionally, together with its co-chaperonin GroES, plays an essential role in assisting protein folding. The GroEL-GroES system forms a nano-cage that allows encapsulation of the non-native substrate proteins and provides a physical environment optimized to promote and accelerate protein folding. The chain is Chaperonin GroEL from Dichelobacter nodosus (strain VCS1703A).